Reading from the N-terminus, the 468-residue chain is Cysteine--tRNA ligase (468 aa).

Cys-33 serves as a coordination point for Zn(2+). Positions 35–45 (ATVQGLPHIGH) match the 'HIGH' region motif. Residues Cys-211, His-236, and Glu-240 each coordinate Zn(2+). The short motif at 267–271 (KMSKS) is the 'KMSKS' region element. Lys-270 is a binding site for ATP.

Belongs to the class-I aminoacyl-tRNA synthetase family. Monomer. Zn(2+) serves as cofactor.

The protein localises to the cytoplasm. It catalyses the reaction tRNA(Cys) + L-cysteine + ATP = L-cysteinyl-tRNA(Cys) + AMP + diphosphate. The chain is Cysteine--tRNA ligase from Mycobacterium ulcerans (strain Agy99).